Reading from the N-terminus, the 103-residue chain is MNRGFSFSTKVATSLNRCNNRSNNISQSVSYNFINKPTTTTSSTTSASTTSQPSFSLPTSCNSNSPQSNLNSFRTKSQTISKFSSNLLGTALFEFQAFLIDDT.

A compositionally biased stretch (low complexity) spans 38-51; it reads TTTTSSTTSASTTS. The segment at 38-70 is disordered; sequence TTTTSSTTSASTTSQPSFSLPTSCNSNSPQSNL. The span at 52–70 shows a compositional bias: polar residues; that stretch reads QPSFSLPTSCNSNSPQSNL.

This is an uncharacterized protein from Dictyostelium discoideum (Social amoeba).